The primary structure comprises 630 residues: Protein phosphatase 2C-like domain-containing protein 1 (630 aa).

A PPM-type phosphatase domain is found at 170 to 621 (GVGICEDRNS…DNITVMVIFL (452 aa)). A compositionally biased stretch (basic and acidic residues) spans 557-569 (TTHRKPCSEKVTD). The interval 557-578 (TTHRKPCSEKVTDRPTSVNDVA) is disordered.

The protein belongs to the PP2C family.

The chain is Protein phosphatase 2C-like domain-containing protein 1 (PP2D1) from Homo sapiens (Human).